Consider the following 926-residue polypeptide: MGARAVLGVTLAVACAGAFFASILRRKDLLGGDTEASGVAGLVEASRLLVDEAIHTTMRRNLRKRGIFSPSQLLSFSKLPEPTSRTASRAAEIMETAVQEVKRRVCRRRDTDQLPTDVLSEELLSTIANLSGCLPHMLPPSCPHTCLANKYRLITGACNNRDHPRWGASNTALARWLPPAYEDGVTEPRGWNPHFLYNGLPLPPVREVTRQVIHVSNEAVTEDGQYSDLLMAWGQYIDHDIAFTPQSTSKAAFAGGADCQLTCENRSPCFPIQLPTNASGAAGATCLPFYRSSAACGSGRQGALVGNLSWAAPRQQMNGLTSFLDASTVYGSSPAQEQRLRNWTSAEGLLRVNTRHRDAGRAFLPFAPPPAPPACAPEPGTPAARAPCFLAGDSRASEVPGLTALHTLWLREHNRLAAAFKALNAHWSADTVYQEARKVVGALHQIVTLRDYVPKILGAEAFGQHVGPYQGYDPAVDPTVSNVFSTAAFRFGHATIHPLVRRLDARFQEHPGSHLPLRAAFFQPWRLLREGGVDPVLRGLLARPAKLQVQDQLMNEELTERLFVLSNSGTLDLASINLQRGRDHGLPGYNEWREFCGLSRLETWADLSAATANGRVADRILGLYQHPDNIDVWLGGLAESFLPGARTGPLFACIIGKQMRALRDGDRFWWENPGVFTEAQRRELSRHSMSRVICDNSGLSHVPLDAFRVGQWPQEFEPCASIQGMDLGAWREAPPSGDACGFPDPVEDGGFLLCEERGQRVLVFSCRHGFRLRGPAQITCTPRGWDSPPPLCKDINECEDETDPPCHASARCKNTKGGVLCECSDPLVLGEDGRTCVDAGRLPRASVVSIALGAVLVCGLAGLAWTVVCRWTHADARPLLPVGEGEGDGKSPSLPLPGCGNRRDVGAAPALEVEQDLSCGSRGLCE.

A signal peptide spans 1-14 (MGARAVLGVTLAVA). The Extracellular segment spans residues 19–844 (FFASILRRKD…TCVDAGRLPR (826 aa)). Asparagine 129 carries N-linked (GlcNAc...) asparagine glycosylation. A disulfide bond links cysteine 142 and cysteine 158. Aspartate 238 serves as a coordination point for heme b. The Proton acceptor role is filled by histidine 239. Ca(2+) is bound at residue aspartate 240. 2 cysteine pairs are disulfide-bonded: cysteine 259/cysteine 269 and cysteine 263/cysteine 286. N-linked (GlcNAc...) asparagine glycosylation is found at asparagine 277 and asparagine 307. Ca(2+) contacts are provided by threonine 321, phenylalanine 323, aspartate 325, and serine 327. N-linked (GlcNAc...) asparagine glycosylation is present at asparagine 342. Heme b contacts are provided by glutamate 398 and histidine 493. 7 disulfide bridges follow: cysteine 596–cysteine 653, cysteine 694–cysteine 719, cysteine 740–cysteine 780, cysteine 766–cysteine 792, cysteine 798–cysteine 812, cysteine 806–cysteine 821, and cysteine 823–cysteine 836. Positions 738-793 (DACGFPDPVEDGGFLLCEERGQRVLVFSCRHGFRLRGPAQITCTPRGWDSPPPLCK) constitute a Sushi domain. The region spanning 794-837 (DINECEDETDPPCHASARCKNTKGGVLCECSDPLVLGEDGRTCV) is the EGF-like; calcium-binding domain. A helical membrane pass occupies residues 845–869 (ASVVSIALGAVLVCGLAGLAWTVVC). Residues 870 to 926 (RWTHADARPLLPVGEGEGDGKSPSLPLPGCGNRRDVGAAPALEVEQDLSCGSRGLCE) are Cytoplasmic-facing.

Belongs to the peroxidase family. XPO subfamily. As to quaternary structure, interacts with DUOX1, DUOX2 and CYBA. The cofactor is Ca(2+). It depends on heme b as a cofactor. In terms of processing, heme is covalently bound through a H(2)O(2)-dependent autocatalytic process. Heme insertion is important for the delivery of protein at the cell surface. Post-translationally, cleaved in its N-terminal part. N-glycosylated; contains mannose and N-acetylglucosamine.

The protein resides in the membrane. The catalysed reaction is 2 iodide + H2O2 + 2 H(+) = diiodine + 2 H2O. The enzyme catalyses [thyroglobulin]-L-tyrosine + iodide + H2O2 + H(+) = [thyroglobulin]-3-iodo-L-tyrosine + 2 H2O. It catalyses the reaction [thyroglobulin]-3-iodo-L-tyrosine + iodide + H2O2 + H(+) = [thyroglobulin]-3,5-diiodo-L-tyrosine + 2 H2O. It carries out the reaction 2 [thyroglobulin]-3,5-diiodo-L-tyrosine + H2O2 = [thyroglobulin]-L-thyroxine + [thyroglobulin]-dehydroalanine + 2 H2O. The catalysed reaction is [thyroglobulin]-3-iodo-L-tyrosine + [thyroglobulin]-3,5-diiodo-L-tyrosine + H2O2 = [thyroglobulin]-3,3',5-triiodo-L-thyronine + [thyroglobulin]-dehydroalanine + 2 H2O. It functions in the pathway hormone biosynthesis; thyroid hormone biosynthesis. Functionally, iodination and coupling of the hormonogenic tyrosines in thyroglobulin to yield the thyroid hormones T(3) and T(4). This Sus scrofa (Pig) protein is Thyroid peroxidase (TPO).